A 1162-amino-acid chain; its full sequence is ATP-dependent helicase/deoxyribonuclease subunit B (1162 aa).

One can recognise a UvrD-like helicase ATP-binding domain in the interval 1 to 275 (MELNAYIGRA…QFFKQQYRFN (275 aa)). 8 to 15 (GRAGTGKS) provides a ligand contact to ATP. The UvrD-like helicase C-terminal domain occupies 269 to 583 (KQQYRFNNKD…SIGTMDLAKV (315 aa)). Cysteine 784, cysteine 1117, cysteine 1120, and cysteine 1126 together coordinate [4Fe-4S] cluster.

This sequence belongs to the helicase family. AddB/RexB type 1 subfamily. In terms of assembly, heterodimer of AddA and AddB. Requires Mg(2+) as cofactor. The cofactor is [4Fe-4S] cluster.

The heterodimer acts as both an ATP-dependent DNA helicase and an ATP-dependent, dual-direction single-stranded exonuclease. Recognizes the chi site generating a DNA molecule suitable for the initiation of homologous recombination. The AddB subunit has 5' -&gt; 3' nuclease activity but not helicase activity. This chain is ATP-dependent helicase/deoxyribonuclease subunit B, found in Staphylococcus haemolyticus (strain JCSC1435).